We begin with the raw amino-acid sequence, 548 residues long: (S)-beta-macrocarpene synthase (548 aa).

The Mg(2+) site is built by D302 and D306. Substrate contacts are provided by D302, D306, R443, and N446. Residues 302 to 306 carry the DDXXD motif motif; it reads DDTLD. Positions 446, 450, and 454 each coordinate Mg(2+).

It belongs to the terpene synthase family. In terms of assembly, monomer. Requires Mg(2+) as cofactor. It depends on Mn(2+) as a cofactor. As to expression, expressed in roots. Not detected in leaves, unless damaged by herbivory or infected by fungi.

The protein localises to the cytoplasm. It carries out the reaction (S)-beta-bisabolene = (S)-beta-macrocarpene. It catalyses the reaction (2E,6E)-farnesyl diphosphate = (S)-beta-bisabolene + diphosphate. The catalysed reaction is (2E)-geranyl diphosphate = (4S)-limonene + diphosphate. The enzyme catalyses (2E)-geranyl diphosphate = beta-myrcene + diphosphate. It carries out the reaction (2E)-geranyl diphosphate = terpinolene + diphosphate. It catalyses the reaction (2E)-geranyl diphosphate + H2O = (S)-linalool + diphosphate. The protein operates within secondary metabolite biosynthesis; terpenoid biosynthesis. In terms of biological role, involved in the biosynthesis of the bicyclic sesquiterpene (S)-beta-macrocarpene. Can use both geranyl diphosphate and farnesyl diphosphate as substrate, but not geranylgeranyl diphosphate. Produces mainly (S)-beta-macrocarpene, but also smaller amounts of beta-bisabolene and (E)-beta-farnesene when used with farnesyl diphosphate as substrate. In the presence of geranyl diphosphate, produces the acyclic monoterpenes beta-myrcene and linalool along with minor amounts of the cyclic compounds limonene, alpha-thujene, sabinene and alpha-terpinolene. May be involved in plant defense. The sequence is that of (S)-beta-macrocarpene synthase from Zea mays (Maize).